Reading from the N-terminus, the 380-residue chain is Chorismate synthase (380 aa).

Arg47 serves as a coordination point for NADP(+). FMN contacts are provided by residues 124–126, Gly288, 303–307, and Arg329; these read RSS and KPTST.

It belongs to the chorismate synthase family. Homotetramer. The cofactor is FMNH2.

The catalysed reaction is 5-O-(1-carboxyvinyl)-3-phosphoshikimate = chorismate + phosphate. It functions in the pathway metabolic intermediate biosynthesis; chorismate biosynthesis; chorismate from D-erythrose 4-phosphate and phosphoenolpyruvate: step 7/7. Its function is as follows. Catalyzes the anti-1,4-elimination of the C-3 phosphate and the C-6 proR hydrogen from 5-enolpyruvylshikimate-3-phosphate (EPSP) to yield chorismate, which is the branch point compound that serves as the starting substrate for the three terminal pathways of aromatic amino acid biosynthesis. This reaction introduces a second double bond into the aromatic ring system. This is Chorismate synthase from Leptospira borgpetersenii serovar Hardjo-bovis (strain JB197).